The chain runs to 192 residues: dTDP-3-amino-3,6-dideoxy-alpha-D-galactopyranose 3-N-acetyltransferase (192 aa).

Belongs to the transferase hexapeptide repeat family.

It carries out the reaction dTDP-3-amino-3,6-dideoxy-alpha-D-galactopyranose + acetyl-CoA = dTDP-3-acetamido-3,6-dideoxy-alpha-D-galactopyranose + CoA + H(+). Catalyzes the transfer of an acetyl group to dTDP-D-Fucp3N to form dTDP-D-Fucp3NAc in the biosynthesis of dTDP-3-acetamido-3,6-dideoxy-alpha-D-galactose, a glycan chain of the S-layer. This chain is dTDP-3-amino-3,6-dideoxy-alpha-D-galactopyranose 3-N-acetyltransferase (fdtC), found in Aneurinibacillus thermoaerophilus.